The chain runs to 254 residues: Major prion protein (254 aa).

An N-terminal signal peptide occupies residues 1–22; the sequence is MANLSYWLLALFVATWTDVGLC. The interval 23-231 is interaction with GRB2, ERI3 and SYN1; it reads KKRPKPGGWN…SQAYYDGRRS (209 aa). Residues 25-104 form a disordered region; that stretch reads RPKPGGWNTG…THNQWNKPSK (80 aa). 5 tandem repeats follow at residues 51–59, 60–67, 68–75, 76–83, and 84–91. The interval 51–91 is 5 X 8 AA tandem repeats of P-H-G-G-G-W-G-Q; the sequence is PQGGGTWGQPHGGGWGQPHGGGWGQPHGGGWGQPHGGGWGQ. A compositionally biased stretch (gly residues) spans 52–95; sequence QGGGTWGQPHGGGWGQPHGGGWGQPHGGGWGQPHGGGWGQGGGT. Cu(2+) contacts are provided by His-61, Gly-62, Gly-63, His-69, Gly-70, Gly-71, His-77, Gly-78, Gly-79, His-85, Gly-86, and Gly-87. The segment at 90 to 231 is prP27-30 (protease resistant core); the sequence is GQGGGTHNQW…SQAYYDGRRS (142 aa). A disulfide bond links Cys-179 and Cys-214. Residues Asn-181 and Asn-197 are each glycosylated (N-linked (GlcNAc...) asparagine). A lipid anchor (GPI-anchor amidated serine) is attached at Ser-231. The propeptide at 232–254 is removed in mature form; the sequence is SAVLFSSPPVILLISFLIFLIVG.

This sequence belongs to the prion family. In terms of assembly, monomer and homodimer. Has a tendency to aggregate into amyloid fibrils containing a cross-beta spine, formed by a steric zipper of superposed beta-strands. Soluble oligomers may represent an intermediate stage on the path to fibril formation. Copper binding may promote oligomerization. Interacts with GRB2, APP, ERI3/PRNPIP and SYN1. Mislocalized cytosolically exposed PrP interacts with MGRN1; this interaction alters MGRN1 subcellular location and causes lysosomal enlargement. Interacts with KIAA1191.

It localises to the cell membrane. The protein localises to the golgi apparatus. Its function is as follows. Its primary physiological function is unclear. Has cytoprotective activity against internal or environmental stresses. May play a role in neuronal development and synaptic plasticity. May be required for neuronal myelin sheath maintenance. May play a role in iron uptake and iron homeostasis. Soluble oligomers are toxic to cultured neuroblastoma cells and induce apoptosis (in vitro). Association with GPC1 (via its heparan sulfate chains) targets PRNP to lipid rafts. Also provides Cu(2+) or Zn(2+) for the ascorbate-mediated GPC1 deaminase degradation of its heparan sulfate side chains. The chain is Major prion protein (PRNP) from Cricetulus griseus (Chinese hamster).